A 717-amino-acid chain; its full sequence is uncharacterized protein (717 aa).

This sequence belongs to the asfivirus C717R family.

Its subcellular location is the virion. This is an uncharacterized protein from African swine fever virus (isolate Tick/Malawi/Lil 20-1/1983) (ASFV).